The primary structure comprises 106 residues: UPF0145 protein Tlet_1264 (106 aa).

Belongs to the UPF0145 family.

This chain is UPF0145 protein Tlet_1264, found in Pseudothermotoga lettingae (strain ATCC BAA-301 / DSM 14385 / NBRC 107922 / TMO) (Thermotoga lettingae).